A 142-amino-acid chain; its full sequence is Large ribosomal subunit protein uL11 (142 aa).

The protein belongs to the universal ribosomal protein uL11 family. In terms of assembly, part of the ribosomal stalk of the 50S ribosomal subunit. Interacts with L10 and the large rRNA to form the base of the stalk. L10 forms an elongated spine to which L12 dimers bind in a sequential fashion forming a multimeric L10(L12)X complex. One or more lysine residues are methylated.

Its function is as follows. Forms part of the ribosomal stalk which helps the ribosome interact with GTP-bound translation factors. This is Large ribosomal subunit protein uL11 from Actinobacillus succinogenes (strain ATCC 55618 / DSM 22257 / CCUG 43843 / 130Z).